Reading from the N-terminus, the 350-residue chain is Bifunctional methylenetetrahydrofolate dehydrogenase/cyclohydrolase, mitochondrial (350 aa).

The N-terminal 35 residues, 1 to 35 (MAATSLMSALAARLLQPAHSCSLRLRPFHLAAVRN), are a transit peptide targeting the mitochondrion. An N6-acetyllysine; alternate modification is found at Lys-50. A Glycyl lysine isopeptide (Lys-Gly) (interchain with G-Cter in SUMO2); alternate cross-link involves residue Lys-50. Substrate contacts are provided by residues 84–88 (YVLNK) and 131–133 (VQL). NAD(+) contacts are provided by residues 200–202 (GRS) and Arg-233. 309–313 (PGGVG) lines the substrate pocket.

This sequence belongs to the tetrahydrofolate dehydrogenase/cyclohydrolase family. In terms of assembly, homodimer. The cofactor is Mg(2+).

It is found in the mitochondrion. It carries out the reaction (6R)-5,10-methylene-5,6,7,8-tetrahydrofolate + NAD(+) = (6R)-5,10-methenyltetrahydrofolate + NADH. The enzyme catalyses (6R)-5,10-methenyltetrahydrofolate + H2O = (6R)-10-formyltetrahydrofolate + H(+). Its function is as follows. Although its dehydrogenase activity is NAD-specific, it can also utilize NADP at a reduced efficiency. This chain is Bifunctional methylenetetrahydrofolate dehydrogenase/cyclohydrolase, mitochondrial (MTHFD2), found in Homo sapiens (Human).